A 718-amino-acid polypeptide reads, in one-letter code: Protein Hook homolog 1 (718 aa).

Residues 8–124 (PLLCDSLILW…RLMQLILGCA (117 aa)) enclose the Calponin-homology (CH) domain. Coiled-coil stretches lie at residues 164–428 (SASD…ELRY) and 473–652 (LLLQ…AKLR).

This sequence belongs to the hook family. In terms of assembly, interacts with microtubules.

Its subcellular location is the cytoplasm. The protein localises to the cytoskeleton. In terms of biological role, may function to promote vesicle trafficking and/or fusion. This chain is Protein Hook homolog 1 (HOOK1), found in Gallus gallus (Chicken).